Here is a 301-residue protein sequence, read N- to C-terminus: Probable aspartoacylase (301 aa).

Residues histidine 13 and glutamate 16 each contribute to the Zn(2+) site. Residues arginine 54 and 61 to 62 (NR) each bind substrate. Zn(2+) is bound at residue histidine 105. Substrate is bound by residues glutamate 163 and tyrosine 273.

The protein belongs to the AspA/AstE family. Aspartoacylase subfamily. The cofactor is Zn(2+).

It carries out the reaction an N-acyl-L-aspartate + H2O = a carboxylate + L-aspartate. This is Probable aspartoacylase from Prochlorococcus marinus (strain MIT 9312).